A 918-amino-acid polypeptide reads, in one-letter code: Protein SEY1 homolog (918 aa).

Residues 1-701 (MESSNHLPNK…AGTSVSSWRN (701 aa)) lie on the Cytoplasmic side of the membrane. The 235-residue stretch at 46–280 (GFKFNVVTIL…VPSDGFFVYS (235 aa)) folds into the GB1/RHD3-type G domain. Residue 56 to 63 (GSQSSGKS) coordinates GTP. A coiled-coil region spans residues 554-626 (SLVLLLKATQ…DALTLLQVLK (73 aa)). A helical membrane pass occupies residues 702 to 722 (IPPVFWLVLLVLGWNELRAAF). Residues 723 to 725 (RVL) are Lumenal-facing. Residues 726–746 (LKFYILIPLLIVSYFTFSYSA) form a helical membrane-spanning segment. Residues 747–918 (NKLLGPKANE…CGKAVHLAQW (172 aa)) lie on the Cytoplasmic side of the membrane.

Belongs to the TRAFAC class dynamin-like GTPase superfamily. GB1/RHD3 GTPase family. RHD3 subfamily.

The protein resides in the endoplasmic reticulum membrane. Probable GTP-binding protein that may be involved in cell development. The protein is Protein SEY1 homolog of Theileria annulata.